We begin with the raw amino-acid sequence, 57 residues long: MPIKKKVMMCLAVTLVFGSMSFPTLTNSGGFKESTDRNTTYIDHSPYKLSDQKKALS.

2 propeptides span residues 1–34 (MPIK…FKES) and 41–57 (YIDH…KALS). A disordered region spans residues 26–57 (TNSGGFKESTDRNTTYIDHSPYKLSDQKKALS).

The protein belongs to the Phr family. In terms of processing, contains a predicted signal peptide cleavage site in the N-terminal region, however the propeptide is probably only subject to processing events at the ends of the mature peptide.

The protein localises to the secreted. The protein resides in the cytoplasm. Functionally, signaling molecule involved the regulation of both sporulation and competence. Secreted during production, but the mature peptide acts intracellularly, indicating that it needs to be imported into the cell to function. Acts by inhibiting RapH activity. Can inhibit both RapH activities, the dephosphorylation of Spo0F and the sequestration of ComA. The sequence is that of Phosphatase RapH inhibitor (phrH) from Bacillus subtilis (strain 168).